The primary structure comprises 402 residues: Beta-1,4-galactosyltransferase 1 (402 aa).

Residues 1–24 lie on the Cytoplasmic side of the membrane; it reads MKFREPLLGGSAAMPGASLQRACR. The helical; Signal-anchor for type II membrane protein transmembrane segment at 25–44 threads the bilayer; it reads LLVAVCALHLGVTLVYYLAG. Topologically, residues 45–402 are lumenal; that stretch reads RDLRRLPQLV…KITVDIGTPS (358 aa). The segment at 77–130 is disordered; sequence LRLRGVAPPPPLQNSSKPRSRAPSNLDAYSHPGPGPGPGSNLTSAPVPSTTTRS. 2 N-linked (GlcNAc...) asparagine glycosylation sites follow: N90 and N117. The span at 116-130 shows a compositional bias: polar residues; sequence SNLTSAPVPSTTTRS. Residues C134 and C176 are joined by a disulfide bond. UDP-alpha-D-galactose is bound by residues 187–191, 226–228, 253–254, and W314; these read PFRNR, FNR, and VD. A disulfide bond links C247 and C266. Position 254 (D254) interacts with Mn(2+). 316-319 lines the N-acetyl-D-glucosamine pocket; the sequence is GEDD. H347 lines the Mn(2+) pocket. 347–349 is a binding site for UDP-alpha-D-galactose; it reads HSR. R359 serves as a coordination point for N-acetyl-D-glucosamine.

This sequence belongs to the glycosyltransferase 7 family. As to quaternary structure, homodimer; and heterodimer with alpha-lactalbumin to form lactose synthase. Interacts (via N-terminal cytoplasmic domain) with UBE2Q1 (via N-terminus); the interaction is direct. It depends on Mn(2+) as a cofactor. Post-translationally, the soluble form derives from the membrane forms by proteolytic processing. Detected in milk (at protein level).

Its subcellular location is the golgi apparatus. It is found in the golgi stack membrane. The protein localises to the cell membrane. The protein resides in the cell surface. It localises to the cell projection. Its subcellular location is the filopodium. It is found in the secreted. The catalysed reaction is D-glucose + UDP-alpha-D-galactose = lactose + UDP + H(+). It carries out the reaction an N-acetyl-beta-D-glucosaminyl derivative + UDP-alpha-D-galactose = a beta-D-galactosyl-(1-&gt;4)-N-acetyl-beta-D-glucosaminyl derivative + UDP + H(+). The enzyme catalyses N-acetyl-D-glucosamine + UDP-alpha-D-galactose = beta-D-galactosyl-(1-&gt;4)-N-acetyl-D-glucosamine + UDP + H(+). It catalyses the reaction a beta-D-GlcNAc-(1-&gt;3)-beta-D-Gal-(1-&gt;4)-beta-D-Glc-(1&lt;-&gt;1)-Cer(d18:1(4E)) + UDP-alpha-D-galactose = a neolactoside nLc4Cer(d18:1(4E)) + UDP + H(+). The catalysed reaction is a beta-D-glucosylceramide + UDP-alpha-D-galactose = a beta-D-galactosyl-(1-&gt;4)-beta-D-glucosyl-(1&lt;-&gt;1)-ceramide + UDP + H(+). It carries out the reaction a neolactoside IV(3)-beta-GlcNAc-nLc4Cer + UDP-alpha-D-galactose = a neolactoside nLc6Cer + UDP + H(+). The protein operates within protein modification; protein glycosylation. Its function is as follows. The Golgi complex form catalyzes the production of lactose in the lactating mammary gland and could also be responsible for the synthesis of complex-type N-linked oligosaccharides in many glycoproteins as well as the carbohydrate moieties of glycolipids. The cell surface form functions as a recognition molecule during a variety of cell to cell and cell to matrix interactions, as those occurring during development and egg fertilization, by binding to specific oligosaccharide ligands on opposing cells or in the extracellular matrix. The secreted form is responsible for the synthesis of complex-type to N-linked oligosaccharides in many glycoproteins as well as the carbohydrate moieties of glycolipids. This is Beta-1,4-galactosyltransferase 1 (B4GALT1) from Bos taurus (Bovine).